Reading from the N-terminus, the 555-residue chain is Sulfite reductase [ferredoxin] 2 (555 aa).

Positions 1-31 (MTTARPAKARNEGQWALGNREPLNPNEEMKQ) are disordered. The segment at residues 69–161 (YTQREQGYDG…AVGLRTTEAC (93 aa)) is a cross-link (3'-(S-cysteinyl)-tyrosine (Tyr-Cys)). 4 residues coordinate [4Fe-4S] cluster: Cys417, Cys423, Cys463, and Cys467. Residue Cys467 coordinates siroheme.

Belongs to the nitrite and sulfite reductase 4Fe-4S domain family. In terms of assembly, monomer. Requires siroheme as cofactor. [4Fe-4S] cluster is required as a cofactor.

It catalyses the reaction hydrogen sulfide + 6 oxidized [2Fe-2S]-[ferredoxin] + 3 H2O = sulfite + 6 reduced [2Fe-2S]-[ferredoxin] + 7 H(+). Catalyzes the reduction of sulfite to sulfide, a step in the biosynthesis of sulfur-containing amino acids and cofactors. This is Sulfite reductase [ferredoxin] 2 (sir2) from Mycolicibacterium paratuberculosis (strain ATCC BAA-968 / K-10) (Mycobacterium paratuberculosis).